The primary structure comprises 1368 residues: Cingulin (1368 aa).

The interaction with TJP3/ZO3 and myosin stretch occupies residues 9–378; sequence MADQHIPVGQ…KQQRTVQSEF (370 aa). Positions 9 to 435 are head; it reads MADQHIPVGQ…EKLPSLQVQP (427 aa). The short motif at 41-55 is the ZIM element; that stretch reads QDSYGVAVRVQGIDG. Disordered stretches follow at residues 71–264, 278–312, 1053–1080, 1163–1183, and 1308–1368; these read FGVQ…TKPL, GQVR…DTAD, SRKE…NSSR, NRSR…RSRG, and QQEI…TSSC. Positions 83–97 are enriched in polar residues; it reads NASNTSPPNYQNYSS. The segment at 101–294 is interaction with F-actin; sequence GPSRSISSES…ARRSQALKDE (194 aa). Low complexity-rich tracts occupy residues 116–132 and 200–211; these read PYGS…YSSA and SQSSRDSAWSRS. Positions 150 to 295 are interaction with TJP2/ZO2; sequence SSLPRPLQAS…RRSQALKDER (146 aa). The span at 228-256 shows a compositional bias: polar residues; the sequence is SATSQQSTSVSNKTKKNGLSTSSPSNQSN. Residues 290–312 show a composition bias toward basic and acidic residues; sequence ALKDERKRSQSLDGRKNYHDTAD. Residues 377-1368 form an interaction with myosin region; sequence EFQLKSTPDL…TESNLQTSSC (992 aa). Positions 436–1330 form a coiled coil; that stretch reads GEDTISLGSQ…VMEKESKRKP (895 aa). The span at 1320–1338 shows a compositional bias: basic and acidic residues; that stretch reads KVMEKESKRKPIRPAHDDD. The segment at 1331 to 1368 is tail; the sequence is IRPAHDDDLSSDGEFGGPYDPSSITSLLTESNLQTSSC. Over residues 1352-1368 the composition is skewed to polar residues; it reads SSITSLLTESNLQTSSC.

This sequence belongs to the cingulin family. Parallel homodimer. Interacts with TJP1/ZO1 and TJP2/ZO2 in vivo, and TJP3/ZO3, myosin and OCLN in vitro, possibly directly. Acts as an F-actin bundling protein in vitro. In terms of tissue distribution, localized on the cytoplasmic face of tight junctions of polarized epithelia and some endothelia.

The protein resides in the cell junction. The protein localises to the tight junction. Functionally, probably plays a role in the formation and regulation of the tight junction (TJ) paracellular permeability barrier, possibly by linking ZO proteins to the actomyosin cytoskeleton. The polypeptide is Cingulin (Xenopus laevis (African clawed frog)).